Consider the following 379-residue polypeptide: Glutamate 5-kinase (379 aa).

K19 is a binding site for ATP. 3 residues coordinate substrate: S59, D146, and N158. ATP contacts are provided by residues 178-179 (TD) and 220-226 (TGGMATK). The PUA domain maps to 285–363 (SGDIIIDDGA…KDIISILGHD (79 aa)).

The protein belongs to the glutamate 5-kinase family.

The protein localises to the cytoplasm. The enzyme catalyses L-glutamate + ATP = L-glutamyl 5-phosphate + ADP. It functions in the pathway amino-acid biosynthesis; L-proline biosynthesis; L-glutamate 5-semialdehyde from L-glutamate: step 1/2. Functionally, catalyzes the transfer of a phosphate group to glutamate to form L-glutamate 5-phosphate. In Vibrio campbellii (strain ATCC BAA-1116), this protein is Glutamate 5-kinase.